Reading from the N-terminus, the 280-residue chain is B3 domain-containing protein At5g25470 (280 aa).

Positions 20–114 (WKSLSPGQNW…FLEVQIFKND (95 aa)) form a DNA-binding region, TF-B3 1. Residues 122–153 (PPEVEPETEPFHPTTPKNSHKETTTASASASA) are disordered. Residues 183–276 (YFVKTLTKGN…ELVTAVRVHF (94 aa)) constitute a DNA-binding region (TF-B3 2).

It localises to the nucleus. The polypeptide is B3 domain-containing protein At5g25470 (Arabidopsis thaliana (Mouse-ear cress)).